The following is a 463-amino-acid chain: Alpha-L-arabinofuranosidase B (463 aa).

The first 26 residues, Met-1–Ala-26, serve as a signal peptide directing secretion. A catalytic region spans residues Gly-27–Lys-308. Cys-29 and Cys-39 are joined by a disulfide. Asn-81 carries N-linked (GlcNAc...) asparagine glycosylation. Disulfide bonds link Cys-89–Cys-94 and Cys-184–Cys-185. Position 227 (Asp-227) interacts with substrate. Catalysis depends on Glu-229, which acts as the Nucleophile. Residue Asn-230 coordinates substrate. The N-linked (GlcNAc...) asparagine glycan is linked to Asn-280. Gly-304 lines the substrate pocket. The interval Leu-309–Ala-463 is ABD. Asn-332 carries an N-linked (GlcNAc...) asparagine glycan. An intrachain disulfide couples Cys-366 to Cys-404. Residues His-381, Asn-383, Phe-384, His-428, Asp-430, Leu-433, and Asp-453 each contribute to the substrate site.

Belongs to the glycosyl hydrolase 54 family. Residue Asn-280 is mannosylated with up to 7 mannose residues.

The protein localises to the secreted. The enzyme catalyses Hydrolysis of terminal non-reducing alpha-L-arabinofuranoside residues in alpha-L-arabinosides.. It functions in the pathway glycan metabolism; L-arabinan degradation. In terms of biological role, secreted alpha-L-arabinofuranosidase that actively hydrolyzes p-NP-alpha-L-arabinofuranoside and is specific for furanose configuration of the carbohydrate ring. Also exhibits significant activity against polymeric arabinose-containing substrates such as arabinan and arabinoxylan, a major component of plant hemicellulose. This Penicillium canescens protein is Alpha-L-arabinofuranosidase B (abfB).